A 443-amino-acid chain; its full sequence is Thymidine phosphorylase (443 aa).

The protein belongs to the thymidine/pyrimidine-nucleoside phosphorylase family. As to quaternary structure, homodimer.

The catalysed reaction is thymidine + phosphate = 2-deoxy-alpha-D-ribose 1-phosphate + thymine. The protein operates within pyrimidine metabolism; dTMP biosynthesis via salvage pathway; dTMP from thymine: step 1/2. The enzymes which catalyze the reversible phosphorolysis of pyrimidine nucleosides are involved in the degradation of these compounds and in their utilization as carbon and energy sources, or in the rescue of pyrimidine bases for nucleotide synthesis. This chain is Thymidine phosphorylase, found in Shewanella sp. (strain MR-7).